Reading from the N-terminus, the 789-residue chain is SWI5-dependent HO expression protein 4 (789 aa).

Ser-18 carries the post-translational modification Phosphoserine.

The protein resides in the cytoplasm. Required for mother cell-specific ho expression. Might be required for the transport of factors (such as ASH1) that promote HO repression from the mother cell into its bud. The sequence is that of SWI5-dependent HO expression protein 4 (SHE4) from Saccharomyces cerevisiae (strain ATCC 204508 / S288c) (Baker's yeast).